A 271-amino-acid polypeptide reads, in one-letter code: (21S)-21-acetoxyl-apo-melianone synthase SDR (271 aa).

Ser150 functions as the Proton donor in the catalytic mechanism. The active-site Proton acceptor is Tyr163. Catalysis depends on Lys167, which acts as the Proton donor/acceptor.

This sequence belongs to the short-chain dehydrogenases/reductases (SDR) family. In terms of tissue distribution, mainly expressed in petioles.

It carries out the reaction 21-O-acetyl-isomeliandiol + A = (21S)-21-acetoxyl-apo-melianone + AH2. Its pathway is secondary metabolite biosynthesis; terpenoid biosynthesis. In terms of biological role, oxidoreductase involved in the biosynthesis of limonoids triterpene natural products such as azadirachtin, an antifeedant widely used as bioinsecticide, and possessing many medicinal applications including anti-tumoral, anti-malarial, anti-rheumatic, antibacterial, anti-inflammatory, anti-pyretic and diuretic effects. Catalyzes the oxidation of 21-O-acetyl-isomeliandiol to (21S)-21-acetoxyl-apo-melianone. The sequence is that of (21S)-21-acetoxyl-apo-melianone synthase SDR from Melia azedarach (Chinaberry tree).